Consider the following 337-residue polypeptide: Membrane-spanning 4-domains subfamily A member 18 (337 aa).

Residues 101–121 (LGTTDLQTQPGGPQNPPTCAP) are disordered. A run of 4 helical transmembrane segments spans residues 155–175 (LGAIQILIGLTHIFTAINPSL), 183–203 (AISGYLVWGGIFFIISGSLSV), 220–240 (MNVVSAIVSLAGVLLLLVDLI), and 252–272 (GGLLPFVLLEFCLTCVVSHFG).

The protein belongs to the MS4A family.

Its subcellular location is the membrane. In Bos taurus (Bovine), this protein is Membrane-spanning 4-domains subfamily A member 18 (MS4A18).